The following is a 422-amino-acid chain: L-threonine dehydratase biosynthetic IlvA (422 aa).

The residue at position 56 (Lys56) is an N6-(pyridoxal phosphate)lysine. Residues Asn83, 189–193, and Ser315 contribute to the pyridoxal 5'-phosphate site; that span reads GGGGL. An ACT-like domain is found at 339–413; it reads HYFILNFPQR…FDPSNIYINE (75 aa).

Belongs to the serine/threonine dehydratase family. In terms of assembly, homotetramer. Pyridoxal 5'-phosphate is required as a cofactor.

The catalysed reaction is L-threonine = 2-oxobutanoate + NH4(+). The protein operates within amino-acid biosynthesis; L-isoleucine biosynthesis; 2-oxobutanoate from L-threonine: step 1/1. In terms of biological role, catalyzes the anaerobic formation of alpha-ketobutyrate and ammonia from threonine in a two-step reaction. The first step involved a dehydration of threonine and a production of enamine intermediates (aminocrotonate), which tautomerizes to its imine form (iminobutyrate). Both intermediates are unstable and short-lived. The second step is the nonenzymatic hydrolysis of the enamine/imine intermediates to form 2-ketobutyrate and free ammonia. In the low water environment of the cell, the second step is accelerated by RidA. The chain is L-threonine dehydratase biosynthetic IlvA (ilvA) from Staphylococcus aureus (strain Mu50 / ATCC 700699).